Reading from the N-terminus, the 349-residue chain is UDP-N-acetylenolpyruvoylglucosamine reductase (349 aa).

The region spanning 25–197 (GIAARARFAA…VAVTFRLPKQ (173 aa)) is the FAD-binding PCMH-type domain. R173 is an active-site residue. S249 serves as the catalytic Proton donor. E345 is an active-site residue.

Belongs to the MurB family. FAD serves as cofactor.

It is found in the cytoplasm. The enzyme catalyses UDP-N-acetyl-alpha-D-muramate + NADP(+) = UDP-N-acetyl-3-O-(1-carboxyvinyl)-alpha-D-glucosamine + NADPH + H(+). The protein operates within cell wall biogenesis; peptidoglycan biosynthesis. In terms of biological role, cell wall formation. The sequence is that of UDP-N-acetylenolpyruvoylglucosamine reductase from Burkholderia cenocepacia (strain HI2424).